Here is a 714-residue protein sequence, read N- to C-terminus: EtfAB:quinone oxidoreductase (714 aa).

6 helical membrane-spanning segments follow: residues Tyr-25–Trp-45, Ala-87–Ile-107, Ile-125–Leu-145, Asp-164–Leu-184, Pro-207–Trp-227, and Met-236–Ala-256. 4Fe-4S ferredoxin-type domains lie at Trp-293–Lys-324 and Tyr-375–Lys-405. Residues Cys-302, Cys-305, Cys-308, Cys-312, Cys-386, Cys-389, Cys-392, and Cys-396 each contribute to the [4Fe-4S] cluster site.

Might constitute a membrane-associated complex with EtfA (Swol_0697), EtfB (Swol_0696), and the butyryl-CoA dehydrogenase Swol_1933 and/or Swol_2052. [4Fe-4S] cluster is required as a cofactor.

It is found in the cell membrane. The protein operates within lipid metabolism; butanoate metabolism. Functionally, oxidoreductase involved in syntrophic growth of S.wolfei with butyrate. Is presumed to link the electron flow from butyryl-CoA dehydrogenases to the membrane, in conjunction with the electron transfer flavoprotein EtfAB. May transfer electrons to the menaquinone pool of the membrane. The sequence is that of EtfAB:quinone oxidoreductase from Syntrophomonas wolfei subsp. wolfei (strain DSM 2245B / Goettingen).